A 533-amino-acid chain; its full sequence is Chromosomal replication initiator protein DnaA (533 aa).

A domain I, interacts with DnaA modulators region spans residues 1 to 72; sequence MNDFWQHCSA…DLARDFWNAP (72 aa). The domain II stretch occupies residues 72–196; it reads PIEVQFVLDP…EAADSMYERS (125 aa). The tract at residues 83–120 is disordered; sequence AGQRSPAGATPLAPRAPLPSANPAPVAPGPASAPAVDA. Pro residues predominate over residues 96-110; the sequence is PRAPLPSANPAPVAP. Positions 111–120 are enriched in low complexity; the sequence is GPASAPAVDA. Residues 197–413 form a domain III, AAA+ region region; sequence KLNPVLTFDN…GALRKILAYS (217 aa). ATP is bound by residues G241, G243, K244, and T245. The segment at 414-533 is domain IV, binds dsDNA; that stretch reads KFHGREITIE…LHVLEQTLKG (120 aa).

Belongs to the DnaA family. As to quaternary structure, oligomerizes as a right-handed, spiral filament on DNA at oriC.

Its subcellular location is the cytoplasm. In terms of biological role, plays an essential role in the initiation and regulation of chromosomal replication. ATP-DnaA binds to the origin of replication (oriC) to initiate formation of the DNA replication initiation complex once per cell cycle. Binds the DnaA box (a 9 base pair repeat at the origin) and separates the double-stranded (ds)DNA. Forms a right-handed helical filament on oriC DNA; dsDNA binds to the exterior of the filament while single-stranded (ss)DNA is stabiized in the filament's interior. The ATP-DnaA-oriC complex binds and stabilizes one strand of the AT-rich DNA unwinding element (DUE), permitting loading of DNA polymerase. After initiation quickly degrades to an ADP-DnaA complex that is not apt for DNA replication. Binds acidic phospholipids. This Burkholderia pseudomallei (strain 1710b) protein is Chromosomal replication initiator protein DnaA.